We begin with the raw amino-acid sequence, 258 residues long: Aspartate/glutamate leucyltransferase (258 aa).

Belongs to the R-transferase family. Bpt subfamily.

It is found in the cytoplasm. It carries out the reaction N-terminal L-glutamyl-[protein] + L-leucyl-tRNA(Leu) = N-terminal L-leucyl-L-glutamyl-[protein] + tRNA(Leu) + H(+). The catalysed reaction is N-terminal L-aspartyl-[protein] + L-leucyl-tRNA(Leu) = N-terminal L-leucyl-L-aspartyl-[protein] + tRNA(Leu) + H(+). Functionally, functions in the N-end rule pathway of protein degradation where it conjugates Leu from its aminoacyl-tRNA to the N-termini of proteins containing an N-terminal aspartate or glutamate. In Bradyrhizobium diazoefficiens (strain JCM 10833 / BCRC 13528 / IAM 13628 / NBRC 14792 / USDA 110), this protein is Aspartate/glutamate leucyltransferase.